The sequence spans 962 residues: Voltage-gated delayed rectifier potassium channel KCNH1 (962 aa).

The Cytoplasmic segment spans residues 1 to 220 (MTMAGGRRGL…LHYCVFKTTW (220 aa)). The region spanning 14–94 (QNTFLENIVR…QTFENYEMNS (81 aa)) is the PAS domain. The PAC domain occupies 93–145 (NSFEILMYKKNRTPVWFFVKIAPIRNEQDKVVLFLCTFSDITAFKQPIEDDSC). Residues 151 to 162 (FARLTRALTSSR) form a required for phosphatidylinositol bisphosphate binding region. The helical transmembrane segment at 221-241 (DWIILILTFYTAILVPYNVSF) threads the bilayer. The Extracellular portion of the chain corresponds to 242–248 (KTRQNNV). A helical membrane pass occupies residues 249–269 (AWLVVDSIVDVIFLVDIVLNF). At 270–290 (HTTFVGPAGEVISDPKLIRMN) the chain is on the cytoplasmic side. A helical membrane pass occupies residues 291 to 309 (YLKTWFVIDLLSCLPYDVI). The Extracellular segment spans residues 310 to 318 (NAFENVDEG). The helical; Voltage-sensor transmembrane segment at 319 to 341 (ISSLFSSLKVVRLLRLGRVARKL) threads the bilayer. At 342–350 (DHYIEYGAA) the chain is on the cytoplasmic side. The chain crosses the membrane as a helical span at residues 351–372 (VLVLLVCVFGLAAHWMACIWYS). Topologically, residues 373–421 (IGDYEIFDEDTKTIRNNSWLYQLALDIGTPYQFNGSGSGKWEGGPSKNS) are extracellular. Residues Asn-388 and Asn-406 are each glycosylated (N-linked (GlcNAc...) asparagine). Positions 422–443 (VYISSLYFTMTSLTSVGFGNIA) form an intramembrane region, pore-forming. The Selectivity filter motif lies at 436 to 441 (SVGFGN). Over 444–450 (PSTDIEK) the chain is Extracellular. A helical transmembrane segment spans residues 451–471 (IFAVAIMMIGSLLYATIFGNV). At 472 to 962 (TTIFQQMYAN…ESDRDIFGAS (491 aa)) the chain is on the cytoplasmic side. A calmodulin-binding region spans residues 646 to 743 (KRDALQKVLE…LDDLDVEKGN (98 aa)). Residues 672–674 (YNL) form an interaction with cyclic nucleotide-binding pocket region. Residues 830 to 852 (ESMETLPERTKASGEATLKKTDS) show a composition bias toward basic and acidic residues. 2 disordered regions span residues 830–859 (ESME…GITK) and 933–962 (SRGS…FGAS). The CAD (involved in subunit assembly) stretch occupies residues 897 to 937 (ATVLEVKHELKEDIKALNAKMTSIEKQLSEILRILMSRGSS). The segment covering 934–952 (RGSSQSPQDTCEVSRPQSP) has biased composition (polar residues). A phosphoserine mark is found at Ser-947, Ser-951, and Ser-954. The span at 953–962 (ESDRDIFGAS) shows a compositional bias: basic and acidic residues.

Belongs to the potassium channel family. H (Eag) (TC 1.A.1.20) subfamily. Kv10.1/KCNH1 sub-subfamily. As to quaternary structure, homomultimer. The potassium channel is composed of a homo- or heterotetrameric complex of pore-forming alpha subunits that can associate with modulating beta subunits. Heteromultimer with KCNH5/EAG2. Interacts with ALG10B. Interacts with RABEP1. Interacts (via C-terminus) with CTTN. Interacts (via cytoplasmic region) with Ca(2+)-bound calmodulin. In terms of processing, channel activity is regulated via tyrosine phosphorylation/dephosphorylation by SRC and PTPN6. Detected in cerebellum, at parallel fiber synapses on Purkinje cell spines. Detected in hippocampus neurons (at protein level). Detected in brain, but not in the other tissues tested; expression is highest in granular cells of the dentate gyrus, in hippocampus CA3 pyramidal cells, and in cerebellar granule cells. Detected in pituitary.

It is found in the cell membrane. Its subcellular location is the nucleus inner membrane. It localises to the cell projection. The protein localises to the dendrite. The protein resides in the axon. It is found in the presynaptic cell membrane. Its subcellular location is the perikaryon. It localises to the postsynaptic density membrane. The protein localises to the early endosome membrane. It carries out the reaction K(+)(in) = K(+)(out). Its activity is regulated as follows. Channel activity is inhibited by interaction with Ca(2+)-bound calmodulin. Interaction of a single pore-forming alpha subunit with a calmodulin chain is sufficient to promote channel closure. Channel activity is not regulated by cyclic nucleotides. Channel activity is inhibited by binding intracellular phosphatidylinositol-3,5-bisphosphate and phosphatidylinositol-4,5-bisphosphate (PIP2), but is not inhibited by phosphatidylinositol 4-phosphate. In terms of biological role, pore-forming (alpha) subunit of a voltage-gated delayed rectifier potassium channel that mediates outward-rectifying potassium currents which, on depolarization, reaches a steady-state level and do not inactivate. The activation kinetics depend on the prepulse potential and external divalent cation concentration. With negative prepulses, the current activation is delayed and slowed down several fold, whereas more positive prepulses speed up activation. The time course of activation is biphasic with a fast and a slowly activating current component. Activates at more positive membrane potentials and exhibit a steeper activation curve. Channel properties are modulated by subunit assembly. Mediates IK(NI) current in myoblasts. Involved in the regulation of cell proliferation and differentiation, in particular adipogenic and osteogenic differentiation in bone marrow-derived mesenchymal stem cells (MSCs). This chain is Voltage-gated delayed rectifier potassium channel KCNH1, found in Rattus norvegicus (Rat).